We begin with the raw amino-acid sequence, 376 residues long: Calcium uniporter protein, mitochondrial (376 aa).

The N-terminal 34 residues, 1 to 34, are a transit peptide targeting the mitochondrion; that stretch reads MAAKVCRSVLLLSRSSGAVASSAYPAFGVSSQRH. Residues 35-257 are Mitochondrial matrix-facing; that stretch reads QGTKTEALSM…LSKKAERRTT (223 aa). The segment at 99 to 189 is N-terminal MCU domain; that stretch reads VSVVYQNGLP…TSYLVQPPRR (91 aa). Positions 213 to 254 form a coiled coil; it reads TLRIEEHQLNKERELIGRLEDLNSQLQPLEKVKEELSKKAER. Residues 258-280 form a helical membrane-spanning segment; sequence WVLWGGMAYMATQFGILARLTWW. Over 281 to 289 the chain is Mitochondrial intermembrane; it reads EYSWDIMEP. A Selectivity filter motif is present at residues 284–292; the sequence is WDIMEPVTY. Residue Glu288 participates in Ca(2+) binding. Residues 290-309 form a helical membrane-spanning segment; that stretch reads VTYFITYGTAMAMYAYFVLT. The interval 309 to 314 is juxtamembrane helix; that stretch reads TRQEYL. Residues 310-376 are Mitochondrial matrix-facing; the sequence is RQEYLYPDAR…PIQQIDTSKD (67 aa). Positions 336 to 363 form a coiled coil; sequence FDIEKYNKLKDAIAEAELDLKRLRDPLQ.

Belongs to the MCU (TC 1.A.77) family. As to quaternary structure, homotetramer. Component of the uniplex complex.

The protein localises to the mitochondrion inner membrane. The catalysed reaction is Ca(2+)(in) = Ca(2+)(out). MCU channel activity is regulated by the heterodimer composed of micu1 and micu2, which act as calcium-sensors. At low calcium levels, micu1 occludes the pore of the MCU channel, preventing mitochondrial calcium uptake. At higher calcium levels, calcium-binding to micu1 and micu2 induces a conformational change that weakens mcu-micu1 interactions and moves the micu1-micu2 heterodimer away from the pore, allowing calcium permeation through the channel. MCU channel activity is gated by emre/smdt1 via the juxtamembrane helix loop. Inhibited by ruthenium red or its derivative Ru360. In terms of biological role, channel-forming and calcium-conducting subunit of the mitochondrial inner membrane calcium uniporter complex (uniplex), which mediates calcium uptake into the mitochondrial matrix. Mcu channel activity is regulated by the calcium-sensor subunits of the uniplex micu1 and micu2. Mitochondrial calcium homeostasis plays key roles in cellular physiology and regulates ATP production, cytoplasmic calcium signals and activation of cell death pathways. Involved in buffering the amplitude of systolic calcium rises in cardiomyocytes. While dispensable for baseline homeostatic cardiac function, acts as a key regulator of short-term mitochondrial calcium loading underlying a 'fight-or-flight' response during acute stress: acts by mediating a rapid increase of mitochondrial calcium in pacemaker cells. Mitochondrial calcium uptake in skeletal muscle cells is involved in muscle size in adults. The polypeptide is Calcium uniporter protein, mitochondrial (Danio rerio (Zebrafish)).